Reading from the N-terminus, the 353-residue chain is Mitogen-activated protein kinase FUS3 (353 aa).

One can recognise a Protein kinase domain in the interval Phe-13–Leu-309. Residues Leu-19 to Val-27 and Lys-42 each bind ATP. The active-site Proton acceptor is Asp-137. Position 180 is a phosphothreonine (Thr-180). The short motif at Thr-180–Tyr-182 is the TXY element. The residue at position 182 (Tyr-182) is a Phosphotyrosine. Residue Lys-345 forms a Glycyl lysine isopeptide (Lys-Gly) (interchain with G-Cter in ubiquitin) linkage.

It belongs to the protein kinase superfamily. CMGC Ser/Thr protein kinase family. MAP kinase subfamily. As to quaternary structure, in the nucleus, FUS3 forms a complex with DIG1, DIG2 and STE12. The interaction of FUS3 with STE12 depends on the presence of both DIG1 and DIG2. STE12 is lost from FUS3/DIG1/DIG2 complex after pheromone treatment. During its activation and phosphorylation, FUS3 forms a membrane-associated complex with the scaffold protein STE5, the MAPKK STE7, the MAPKKK STE11, and the G-protein beta subunit GBB/STE4; interacting directly with STE7 and STE5. It depends on Mg(2+) as a cofactor. Post-translationally, dually phosphorylated on Thr-180 and Tyr-182 by STE7 in response to pheromone induction, which activates the enzyme. Activated FUS3 initiates a feedback signal, down-regulating phosphorylation of both, FUS3 and KSS1.

It is found in the nucleus. It localises to the cytoplasm. The protein resides in the periplasm. The enzyme catalyses L-seryl-[protein] + ATP = O-phospho-L-seryl-[protein] + ADP + H(+). It catalyses the reaction L-threonyl-[protein] + ATP = O-phospho-L-threonyl-[protein] + ADP + H(+). Activated by tyrosine and threonine phosphorylation after pheromone treatment. Together with closely related KSS1, FUS3 is the final kinase in the signal transduction cascade regulating activation/repression of the mating and filamentation pathways, induced by pheromone and nitrogen/carbon limitation, respectively. Phosphorylated FUS3 activates the mating but suppresses the filamentation pathway, whereas activated KSS1 activates both pathways. Pheromone-activated FUS3 functions by inhibiting the binding of the transcriptional activator STE12 to filamentation specific genes while inducing its binding to and activity at mating specific genes. Non-activated FUS3 has a repressive effect on STE12 transcriptional activity. KSS1 can partially compensate for the lack of FUS3 but mating efficiency is reduced and the filamentation program is partially activated upon pheromone signaling. FUS3 phosphorylates STE7, STE5, FAR1, DIG1, DIG2 and STE12. This chain is Mitogen-activated protein kinase FUS3 (FUS3), found in Saccharomyces cerevisiae (strain ATCC 204508 / S288c) (Baker's yeast).